A 345-amino-acid polypeptide reads, in one-letter code: uncharacterized protein (345 aa).

Belongs to the cycloisomerase 2 family.

This is an uncharacterized protein from Staphylococcus saprophyticus subsp. saprophyticus (strain ATCC 15305 / DSM 20229 / NCIMB 8711 / NCTC 7292 / S-41).